Reading from the N-terminus, the 459-residue chain is Transcription factor mlcR (459 aa).

Residues 21–53 (CDRCHAQKLKCTGSNANLVRAQCQRCQQAGLRC) constitute a DNA-binding region (zn(2)-C6 fungal-type). 2 disordered regions span residues 64–84 (LHKE…PMTA) and 135–170 (DPES…DFEG). Low complexity predominate over residues 69-78 (AAGTTRATET).

Its subcellular location is the nucleus. Transcription factor that regulates the gene cluster that mediates the biosynthesis of compactin, also known as mevastatin or ML-236B, and which acts as a potent competitive inhibitor of HMG-CoA reductase. Binds to the consensus-binding motif 5'-WCGG-N(6)-TCGG-3' of target genes. The protein is Transcription factor mlcR of Penicillium citrinum.